The sequence spans 1912 residues: Protein javelin (1912 aa).

Disordered regions lie at residues methionine 1–tyrosine 32, glycine 89–alanine 145, arginine 298–serine 377, glutamine 460–glutamate 515, threonine 545–glutamine 586, serine 764–valine 920, isoleucine 965–leucine 1010, glycine 1257–alanine 1297, glutamate 1486–aspartate 1507, and tyrosine 1881–methionine 1912. Composition is skewed to basic residues over residues glutamine 97 to alanine 133 and serine 299 to proline 313. The span at alanine 339 to serine 354 shows a compositional bias: polar residues. The segment covering histidine 355–histidine 374 has biased composition (low complexity). The segment covering glutamate 489–glutamate 498 has biased composition (polar residues). Residues threonine 499–serine 512 are compositionally biased toward low complexity. The span at serine 553–valine 566 shows a compositional bias: acidic residues. Over residues serine 568–glutamine 586 the composition is skewed to polar residues. Basic and acidic residues-rich tracts occupy residues glutamine 772–arginine 792 and arginine 802–glutamate 869. The span at serine 890–asparagine 904 shows a compositional bias: acidic residues. The segment covering isoleucine 965–proline 979 has biased composition (basic and acidic residues). Positions proline 981–threonine 990 are enriched in low complexity. Composition is skewed to acidic residues over residues leucine 1494–aspartate 1507 and glutamate 1903–methionine 1912.

Its subcellular location is the cytoplasm. It is found in the cytoskeleton. In terms of biological role, important for normal assembly of actin bundles during bristle formation. The chain is Protein javelin from Drosophila melanogaster (Fruit fly).